Consider the following 204-residue polypeptide: Cytochrome c oxidase subunit 3 (204 aa).

The next 5 helical transmembrane spans lie at 12–32 (YGNL…IQWW), 56–76 (GMML…WAYF), 101–121 (FQIP…VTWA), 133–153 (AIHS…LQMM), and 171–191 (FFVA…FLFM).

It belongs to the cytochrome c oxidase subunit 3 family. Component of the cytochrome c oxidase (complex IV, CIV), a multisubunit enzyme composed of a catalytic core of 3 subunits and several supernumerary subunits. The complex exists as a monomer or a dimer and forms supercomplexes (SCs) in the inner mitochondrial membrane with ubiquinol-cytochrome c oxidoreductase (cytochrome b-c1 complex, complex III, CIII).

The protein resides in the mitochondrion inner membrane. It catalyses the reaction 4 Fe(II)-[cytochrome c] + O2 + 8 H(+)(in) = 4 Fe(III)-[cytochrome c] + 2 H2O + 4 H(+)(out). Functionally, component of the cytochrome c oxidase, the last enzyme in the mitochondrial electron transport chain which drives oxidative phosphorylation. The respiratory chain contains 3 multisubunit complexes succinate dehydrogenase (complex II, CII), ubiquinol-cytochrome c oxidoreductase (cytochrome b-c1 complex, complex III, CIII) and cytochrome c oxidase (complex IV, CIV), that cooperate to transfer electrons derived from NADH and succinate to molecular oxygen, creating an electrochemical gradient over the inner membrane that drives transmembrane transport and the ATP synthase. Cytochrome c oxidase is the component of the respiratory chain that catalyzes the reduction of oxygen to water. Electrons originating from reduced cytochrome c in the intermembrane space (IMS) are transferred via the dinuclear copper A center (CU(A)) of subunit 2 and heme A of subunit 1 to the active site in subunit 1, a binuclear center (BNC) formed by heme A3 and copper B (CU(B)). The BNC reduces molecular oxygen to 2 water molecules using 4 electrons from cytochrome c in the IMS and 4 protons from the mitochondrial matrix. This is Cytochrome c oxidase subunit 3 (COIII) from Enteroctopus dofleini (North Pacific giant octopus).